Reading from the N-terminus, the 157-residue chain is SsrA-binding protein (157 aa).

The tract at residues 133–157 (LHDKRESEKKRDWGREKGRLLRARG) is disordered. Residues 135-151 (DKRESEKKRDWGREKGR) are compositionally biased toward basic and acidic residues.

The protein belongs to the SmpB family.

The protein localises to the cytoplasm. Its function is as follows. Required for rescue of stalled ribosomes mediated by trans-translation. Binds to transfer-messenger RNA (tmRNA), required for stable association of tmRNA with ribosomes. tmRNA and SmpB together mimic tRNA shape, replacing the anticodon stem-loop with SmpB. tmRNA is encoded by the ssrA gene; the 2 termini fold to resemble tRNA(Ala) and it encodes a 'tag peptide', a short internal open reading frame. During trans-translation Ala-aminoacylated tmRNA acts like a tRNA, entering the A-site of stalled ribosomes, displacing the stalled mRNA. The ribosome then switches to translate the ORF on the tmRNA; the nascent peptide is terminated with the 'tag peptide' encoded by the tmRNA and targeted for degradation. The ribosome is freed to recommence translation, which seems to be the essential function of trans-translation. In Bradyrhizobium sp. (strain BTAi1 / ATCC BAA-1182), this protein is SsrA-binding protein.